The sequence spans 673 residues: MEFKIVNTICPYCGVGCGLGLVVKDGRVIGIHPNKRHPINEGKLCAKGNYCYQFIHSKDRLTKPLIKKESGFVETTWNKALEVIAENLKTYKDEIGFFSSARCTNEDNYILQKFARVALKTNNIDHCARLUHSATVTGMSACFGSGAMTNSIEDIELADCILIIGSNTFEQHPLIARRIMRAKDKGAKIIVIDPRRTITAKNSDIYLQIIPGTNVALINAMINVIIKENLIDKEFIKNRTEGFEKLKEIIKKYTPEYASKICGVDKELIIESAKIYGNAERASIIYCMGVTQFTHGVDAVKALCNLAMITGNIGKEGTGVNPLRGQNNVQGACDMGALPNVFPGYQKVEDGYKLFEEYWKTDLNPNSGLTIPEMIDESGKNIKFLYIMGENPIVSDPDVKHVEKALKSLDFLVVQDIFLTETAKLADVVLPAACWAEKDGTFTNTERRVQLIRKAVNPPGEALEDWIIIKKLAEKLGYGDKFNYNKVEDIFNEIRKVTPQYRGITYKRLKIDGIHWPCLDENHSGTKILHKDKFLTDNGRGKIFPVEYREVAELPDKDYPFILTTGRIIFHYHTGTMTRRCKNLVEEINEPFIEINPDDAKSLKIENGDLVKVISRRGEITAKARITEDIKKGVVFMPFHFVEANPNVLTNTALDELCKIPELKVCAVKIERI.

A 4Fe-4S Mo/W bis-MGD-type domain is found at 3 to 59 (FKIVNTICPYCGVGCGLGLVVKDGRVIGIHPNKRHPINEGKLCAKGNYCYQFIHSKD). The [4Fe-4S] cluster site is built by C10, C13, C17, and C45. A non-standard amino acid (selenocysteine) is located at residue U131.

This sequence belongs to the prokaryotic molybdopterin-containing oxidoreductase family. As to quaternary structure, dimer of an alpha (FdhA) and a beta (FdhB) subunit. [4Fe-4S] cluster serves as cofactor. Requires Mo-bis(molybdopterin guanine dinucleotide) as cofactor. It depends on Zn(2+) as a cofactor.

It carries out the reaction oxidized coenzyme F420-(gamma-L-Glu)(n) + formate + 2 H(+) = reduced coenzyme F420-(gamma-L-Glu)(n) + CO2. In terms of biological role, catalyzes the oxidation of formate to carbon dioxide, with coenzyme F420 as the electron acceptor. The sequence is that of F420-dependent formate dehydrogenase subunit alpha (fdhA) from Methanocaldococcus jannaschii (strain ATCC 43067 / DSM 2661 / JAL-1 / JCM 10045 / NBRC 100440) (Methanococcus jannaschii).